The sequence spans 142 residues: Ribosome-binding factor A (142 aa).

A disordered region spans residues 119-142 (ETLGEVQSESDQPTTDETTTVNKT). Polar residues predominate over residues 123 to 142 (EVQSESDQPTTDETTTVNKT).

This sequence belongs to the RbfA family. As to quaternary structure, monomer. Binds 30S ribosomal subunits, but not 50S ribosomal subunits or 70S ribosomes.

The protein resides in the cytoplasm. In terms of biological role, one of several proteins that assist in the late maturation steps of the functional core of the 30S ribosomal subunit. Associates with free 30S ribosomal subunits (but not with 30S subunits that are part of 70S ribosomes or polysomes). Required for efficient processing of 16S rRNA. May interact with the 5'-terminal helix region of 16S rRNA. This is Ribosome-binding factor A from Prochlorococcus marinus (strain MIT 9303).